Here is a 670-residue protein sequence, read N- to C-terminus: uncharacterized protein (670 aa).

This is an uncharacterized protein from Ictalurid herpesvirus 1 (strain Auburn) (IcHV-1).